The chain runs to 410 residues: Aspartic proteinase Asp1 (410 aa).

The signal sequence occupies residues 1 to 23 (MTARLALLASLLLLLQLVPPSSA). Positions 24–46 (VVLELHGNVYPIGHFFVTMNIGD) are cleaved as a propeptide — removed in mature form. The 355-residue stretch at 38–392 (FFVTMNIGDP…DSERSLLGWV (355 aa)) folds into the Peptidase A1 domain. Residues Asp56 and Asp257 contribute to the active site.

Belongs to the peptidase A1 family. As to expression, expressed in pollen, nucellus, ovary wall, shoot and root meristem, coleoptiles of immature seeds, and somatic embryos.

Its function is as follows. Possesses protease activity in vitro. This chain is Aspartic proteinase Asp1 (ASP1), found in Oryza sativa subsp. indica (Rice).